We begin with the raw amino-acid sequence, 244 residues long: MKIDILTLFPEMFVSPFNESIIKRAREQGIITINITNIRDFAQDRQQQVDDYPYGGGAGMVLKANVLGTAIEEVKGPDTWVLYMSPQGKPLNQDRVWELARRKELLIVCGHYEGIDERVMAMVDEEISIGDYILTGGELPAMVLVDAIARLIPGVLGDENSAMEESFSCSLLEYPQYTRPASYGEQEVPEVLLSGHHENIRRWRKKQSLLRTLLKRPDLLLKKCFDEEEKSLLEEILFHRENKR.

S-adenosyl-L-methionine is bound by residues G110 and 129–134 (IGDYIL).

The protein belongs to the RNA methyltransferase TrmD family. Homodimer.

Its subcellular location is the cytoplasm. The enzyme catalyses guanosine(37) in tRNA + S-adenosyl-L-methionine = N(1)-methylguanosine(37) in tRNA + S-adenosyl-L-homocysteine + H(+). In terms of biological role, specifically methylates guanosine-37 in various tRNAs. The polypeptide is tRNA (guanine-N(1)-)-methyltransferase (Syntrophomonas wolfei subsp. wolfei (strain DSM 2245B / Goettingen)).